Reading from the N-terminus, the 479-residue chain is Chromosomal replication initiator protein DnaA (479 aa).

Residues methionine 1–aspartate 94 form a domain I, interacts with DnaA modulators region. The segment at aspartate 94–valine 142 is domain II. Residues leucine 106–arginine 137 are disordered. A domain III, AAA+ region region spans residues proline 143–alanine 359. The ATP site is built by glycine 188, glycine 190, lysine 191, and threonine 192. The domain IV, binds dsDNA stretch occupies residues aspartate 360–glycine 479.

The protein belongs to the DnaA family. As to quaternary structure, oligomerizes as a right-handed, spiral filament on DNA at oriC.

The protein resides in the cytoplasm. Plays an essential role in the initiation and regulation of chromosomal replication. ATP-DnaA binds to the origin of replication (oriC) to initiate formation of the DNA replication initiation complex once per cell cycle. Binds the DnaA box (a 9 base pair repeat at the origin) and separates the double-stranded (ds)DNA. Forms a right-handed helical filament on oriC DNA; dsDNA binds to the exterior of the filament while single-stranded (ss)DNA is stabiized in the filament's interior. The ATP-DnaA-oriC complex binds and stabilizes one strand of the AT-rich DNA unwinding element (DUE), permitting loading of DNA polymerase. After initiation quickly degrades to an ADP-DnaA complex that is not apt for DNA replication. Binds acidic phospholipids. This chain is Chromosomal replication initiator protein DnaA, found in Gluconobacter oxydans (strain 621H) (Gluconobacter suboxydans).